Consider the following 239-residue polypeptide: Pyridoxine 5'-phosphate synthase (239 aa).

Asn-9 contributes to the 3-amino-2-oxopropyl phosphate binding site. 11–12 (DH) provides a ligand contact to 1-deoxy-D-xylulose 5-phosphate. Residue Arg-20 participates in 3-amino-2-oxopropyl phosphate binding. Residue His-45 is the Proton acceptor of the active site. Residues Arg-47 and His-52 each contribute to the 1-deoxy-D-xylulose 5-phosphate site. Catalysis depends on Glu-72, which acts as the Proton acceptor. Thr-102 provides a ligand contact to 1-deoxy-D-xylulose 5-phosphate. His-189 (proton donor) is an active-site residue. Residues Gly-190 and 211–212 (GH) contribute to the 3-amino-2-oxopropyl phosphate site.

The protein belongs to the PNP synthase family. As to quaternary structure, homooctamer; tetramer of dimers.

It localises to the cytoplasm. It catalyses the reaction 3-amino-2-oxopropyl phosphate + 1-deoxy-D-xylulose 5-phosphate = pyridoxine 5'-phosphate + phosphate + 2 H2O + H(+). It functions in the pathway cofactor biosynthesis; pyridoxine 5'-phosphate biosynthesis; pyridoxine 5'-phosphate from D-erythrose 4-phosphate: step 5/5. Catalyzes the complicated ring closure reaction between the two acyclic compounds 1-deoxy-D-xylulose-5-phosphate (DXP) and 3-amino-2-oxopropyl phosphate (1-amino-acetone-3-phosphate or AAP) to form pyridoxine 5'-phosphate (PNP) and inorganic phosphate. In Ehrlichia chaffeensis (strain ATCC CRL-10679 / Arkansas), this protein is Pyridoxine 5'-phosphate synthase.